A 159-amino-acid chain; its full sequence is Cytochrome c-type biogenesis protein CcmE (159 aa).

The Cytoplasmic portion of the chain corresponds to 1 to 7 (MTRKGRR). The chain crosses the membrane as a helical; Signal-anchor for type II membrane protein span at residues 8–28 (LVLIGAGLGVLALAAGLILSA). Residues 29–159 (LNDTIVFFRS…AAPVQRAPGS (131 aa)) lie on the Periplasmic side of the membrane. Residues H121 and Y125 each coordinate heme. The interval 134–159 (LKKQGRWQEGGPAPGTAAPVQRAPGS) is disordered.

This sequence belongs to the CcmE/CycJ family.

It localises to the cell inner membrane. Heme chaperone required for the biogenesis of c-type cytochromes. Transiently binds heme delivered by CcmC and transfers the heme to apo-cytochromes in a process facilitated by CcmF and CcmH. This chain is Cytochrome c-type biogenesis protein CcmE, found in Xanthobacter autotrophicus (strain ATCC BAA-1158 / Py2).